Reading from the N-terminus, the 114-residue chain is Putative toxin HigB3 (114 aa).

Belongs to the mycobacterial HigB family.

In terms of biological role, putative toxic component of a type II toxin-antitoxin (TA) system. Its cognate antitoxin would be HigA3. Not toxic upon expression in M.smegmatis. This chain is Putative toxin HigB3, found in Mycobacterium tuberculosis (strain ATCC 25618 / H37Rv).